We begin with the raw amino-acid sequence, 1049 residues long: Ataxin-2-like protein (1049 aa).

M1 bears the N-acetylmethionine mark. The segment at 1 to 54 is disordered; the sequence is MLKPQPPQQTSQPQQPPPTQQAVARRSPGGTSPPNGGLPGPLTATAAPPGPPAA. S27 carries the post-translational modification Phosphoserine. Residue T45 is modified to Phosphothreonine. The tract at residues 96-119 is interaction with MPL; sequence SVRGQTTGKGPPQSPVFEGVYNNS. S109 is subject to Phosphoserine. At Y116 the chain carries Phosphotyrosine. The region spanning 120–197 is the Sm domain; it reads RMLHFLTAVV…VLLVHFRNVD (78 aa). K205 is modified (N6-acetyllysine). S236 bears the Phosphoserine mark. Y262 is subject to Phosphotyrosine. S304 is modified (phosphoserine). Phosphotyrosine is present on Y307. Positions 314 to 326 are enriched in basic and acidic residues; sequence ENDDGRTEEEKHS. Disordered stretches follow at residues 314–522, 554–573, 578–704, 736–772, 824–852, 868–944, and 999–1049; these read ENDD…RNLE, QFKLQPSSSPETGLDPFPSR, EAKG…LTAG, VSNSVPGQQGKYRGAKGSLPPQRSDQHQPASAPPMMQ, SNPRMLTSGSHPQAIVSSSTPQYPAAEQP, HATQ…SSFP, and PQGH…PPGN. Polar residues predominate over residues 328-340; that stretch reads VQRQGSGRESPSL. Residues S333 and S337 each carry the phosphoserine modification. A Glycyl lysine isopeptide (Lys-Gly) (interchain with G-Cter in SUMO2) cross-link involves residue K346. Y347 carries the phosphotyrosine modification. R359 is subject to Asymmetric dimethylarginine. Over residues 361-378 the composition is skewed to low complexity; it reads GVRCSSSRGGRPGLSSLP. Phosphoserine is present on residues S389, S407, and S453. Residues 454 to 466 show a composition bias toward low complexity; that stretch reads PKSAAPAPVSASC. Over residues 475–487 the composition is skewed to polar residues; that stretch reads VASSASIPVTSSV. A phosphoserine mark is found at S496 and S499. The segment covering 508–519 has biased composition (basic and acidic residues); it reads DVKELPTKEPSR. Phosphoserine is present on residues S560, S561, and S562. Positions 578 to 587 are enriched in basic and acidic residues; the sequence is EAKGKEKEVD. S597 is subject to Phosphoserine. T635 is modified (phosphothreonine). A phosphoserine mark is found at S637, S677, S683, and S687. The segment covering 681 to 697 has biased composition (low complexity); sequence STSTPTSPGPRTHSTPS. 2 stretches are compositionally biased toward polar residues: residues 824–845 and 878–902; these read SNPRMLTSGSHPQAIVSSSTPQ and QPATTPTGSQPQSQHAAPSPVQHQA. Low complexity predominate over residues 935–944; that stretch reads SAQSPQSSFP. Residues 1033–1042 show a composition bias toward polar residues; sequence QVQSHPSQQL.

This sequence belongs to the ataxin-2 family. In terms of assembly, interacts with MPL/TPOR and EPOR and dissociates after ligand stimulation. Interacts with DDX6, G3BP, and ATXN2. Interacts with PRMT1. Interacts with CIC and ATXN1. Thrombopoietin triggers the phosphorylation on tyrosine residues in a way that is dependent on MPL C-terminal domain. In terms of processing, asymmetrically dimethylated. Probably methylated by PRMT1. Expressed in cerebellum.

Its subcellular location is the membrane. It is found in the cytoplasm. The protein localises to the nucleus speckle. It localises to the cytoplasmic granule. Functionally, involved in the regulation of stress granule and P-body formation. The chain is Ataxin-2-like protein (Atxn2l) from Mus musculus (Mouse).